Here is a 556-residue protein sequence, read N- to C-terminus: Double-strand-break repair protein rad21-like protein 1 (556 aa).

Belongs to the rad21 family. As to quaternary structure, component of some meiotic cohesin complex composed of the SMC1 (SMC1A or SMC1B) and SMC3 heterodimer attached via their hinge domain, RAD21L which link them, and STAG3.

It localises to the nucleus. Its subcellular location is the chromosome. Functionally, meiosis-specific component of some cohesin complex required during the initial steps of prophase I in male meiosis. Probably required during early meiosis in males for separation of sister chromatids and homologous chromosomes. Replaces RAD21 in premeiotic S phase (during early stages of prophase I), while RAD21 reappears in later stages of prophase I. Involved in synaptonemal complex assembly, synapsis initiation and crossover recombination between homologous chromosomes during prophase I. The protein is Double-strand-break repair protein rad21-like protein 1 (RAD21L1) of Homo sapiens (Human).